We begin with the raw amino-acid sequence, 873 residues long: MVANGHFAGSADGQDSSSYEHGVQVIDEDKEFNPNVSKYLTYENVTPAGFNYHLISVFGSQSTGKSTLLNNLFGTHFSVMSETERRQTTKGIWLSKNKRLELRKDRDPQAKMADNILVMDVEGTDGRERGEDQDFERKSALFALATSEVLIVNIWEHQVGLYQGANMGLLKTVFEVNLELFLKDNKSTPRSLLFFVIRDFLGTTPLQNLQNTLLQDLNRIWSSLSKPAGLENSTINDYFDFAFAGLPHKNFQPDKFMDEVQKLSTRFCEGHRDPSSLDRKGTGSIEGGIFLPEYHRRIPADGFAVYAEGVWDQIVNNKDLDLPTQQELLAQFRCDEISREALVAFDEAISPFESKQAEAVQAGTPEVLGGLGPAMRNARMKAVKNFDTEACRYHKRVYQMKKTELQDKIDTRLKALFLGQLNAAHRSGVQEFSESVSAAVKAGQKKGASYDFAEIVRRQRKLAIEKFEKEARSTLVEDAPWSNYQQELSLYQKDLERTSGQLRRDEMRRLATRVERWVRSRLGESVDLEFNALGSGRGGSGAPEFGDKPSEKTIWDRVWTLFVDTVLDAERRFTERASSFDAGLDEVDVGLWRLRRKSWGVLRAKIDEEMMEGNLLLKLRENFEDKFRYDDAGVPRIWRPTDDIESVYSQARESTLTLIPLLARFKLAETNAPPPLDKWIGHTPSSATPADEEDLTPIGGVDDDEGKSLEEEMTLIGEAKKQDLTVRFKKTADGVYVEAKRSAIGGITQVPLYFYGLLFALGWNEILAVLRNPVYFLLLFVCAIGAYITYQLNLWGPIIKMTEAASHQAVEEGKRRLREFLEASDTGRQAMAMSGARNATEEHEMSRLSRKPAERGGRKNRADEDVDDDDDDF.

The disordered stretch occupies residues Met-1–His-21. Topologically, residues Met-1–Gln-749 are cytoplasmic. Residues Gly-49 to Ala-307 form the GB1/RHD3-type G domain. GTP is bound at residue Gly-59–Ser-66. Residues Ser-482–Glu-506 are a coiled coil. The disordered stretch occupies residues Leu-676–Asp-703. Positions Ala-690–Asp-703 are enriched in acidic residues. A helical transmembrane segment spans residues Val-750 to Leu-770. Topologically, residues Arg-771–Pro-773 are lumenal. Residues Val-774–Leu-794 form a helical membrane-spanning segment. At Trp-795–Phe-873 the chain is on the cytoplasmic side. Positions Arg-828 to Phe-873 are disordered. Basic and acidic residues predominate over residues Ala-839 to Asp-863. Residues Glu-864–Phe-873 show a composition bias toward acidic residues.

This sequence belongs to the TRAFAC class dynamin-like GTPase superfamily. GB1/RHD3 GTPase family. RHD3 subfamily.

The protein resides in the endoplasmic reticulum membrane. Functionally, cooperates with the reticulon proteins and tubule-shaping DP1 family proteins to generate and maintain the structure of the tubular endoplasmic reticulum network. Has GTPase activity, which is required for its function in ER organization. The chain is Protein SEY1 from Ajellomyces capsulatus (strain G186AR / H82 / ATCC MYA-2454 / RMSCC 2432) (Darling's disease fungus).